Here is a 604-residue protein sequence, read N- to C-terminus: NADP-dependent malic enzyme, mitochondrial (604 aa).

The disordered stretch occupies residues 28–50 (SAPAQGCHSKSGPPRPVPLKKRG). Tyr-137 serves as the catalytic Proton donor. Arg-190 is a binding site for NADP(+). Lys-208 serves as the catalytic Proton acceptor. Glu-280, Asp-281, and Asp-304 together coordinate a divalent metal cation. Asp-304 is an NADP(+) binding site. Ser-371 carries the phosphoserine modification. Residue Asn-443 coordinates NADP(+).

Belongs to the malic enzymes family. Requires Mg(2+) as cofactor. The cofactor is Mn(2+).

It localises to the mitochondrion matrix. The catalysed reaction is (S)-malate + NADP(+) = pyruvate + CO2 + NADPH. It carries out the reaction oxaloacetate + H(+) = pyruvate + CO2. The sequence is that of NADP-dependent malic enzyme, mitochondrial (Me3) from Mus musculus (Mouse).